The sequence spans 459 residues: Phosphomethylpyrimidine synthase (459 aa).

Substrate-binding positions include asparagine 80, methionine 109, tyrosine 139, histidine 175, 195–197 (SRG), 236–239 (DSLR), and glutamate 275. Residue histidine 279 participates in Zn(2+) binding. Position 302 (tyrosine 302) interacts with substrate. Histidine 343 provides a ligand contact to Zn(2+). The [4Fe-4S] cluster site is built by cysteine 423, cysteine 426, and cysteine 431.

Belongs to the ThiC family. [4Fe-4S] cluster serves as cofactor.

It catalyses the reaction 5-amino-1-(5-phospho-beta-D-ribosyl)imidazole + S-adenosyl-L-methionine = 4-amino-2-methyl-5-(phosphooxymethyl)pyrimidine + CO + 5'-deoxyadenosine + formate + L-methionine + 3 H(+). It functions in the pathway cofactor biosynthesis; thiamine diphosphate biosynthesis. Its function is as follows. Catalyzes the synthesis of the hydroxymethylpyrimidine phosphate (HMP-P) moiety of thiamine from aminoimidazole ribotide (AIR) in a radical S-adenosyl-L-methionine (SAM)-dependent reaction. The polypeptide is Phosphomethylpyrimidine synthase (Synechocystis sp. (strain ATCC 27184 / PCC 6803 / Kazusa)).